A 698-amino-acid chain; its full sequence is Ion-translocating oxidoreductase complex subunit C (698 aa).

4Fe-4S ferredoxin-type domains lie at 366 to 397 (TEMGLSEPEQSCIRCGLCVDACPAGLLPQQLY) and 407 to 436 (KARNHNLFDCIECGACAYVCPSNIPLVQYY). [4Fe-4S] cluster-binding residues include Cys-377, Cys-380, Cys-383, Cys-387, Cys-416, Cys-419, Cys-422, and Cys-426.

The protein belongs to the 4Fe4S bacterial-type ferredoxin family. RnfC subfamily. As to quaternary structure, the complex is composed of six subunits: RnfA, RnfB, RnfC, RnfD, RnfE and RnfG. [4Fe-4S] cluster is required as a cofactor.

It localises to the cell inner membrane. Part of a membrane-bound complex that couples electron transfer with translocation of ions across the membrane. The sequence is that of Ion-translocating oxidoreductase complex subunit C from Yersinia pseudotuberculosis serotype O:3 (strain YPIII).